The primary structure comprises 275 residues: Tryptase (275 aa).

The N-terminal stretch at 1–20 (MLNLLVLALPLLVSLVHTAP) is a signal peptide. The propeptide at 21–30 (APGQALERAG) is activation peptide. Residues 31–272 (IVGGKEAPGH…YLDWIHQCIP (242 aa)) enclose the Peptidase S1 domain. Cysteine 59 and cysteine 75 are joined by a disulfide. Catalysis depends on charge relay system residues histidine 74 and aspartate 121. Asparagine 132 carries an N-linked (GlcNAc...) asparagine glycan. 3 disulfide bridges follow: cysteine 155–cysteine 230, cysteine 188–cysteine 211, and cysteine 220–cysteine 248. Serine 224 (charge relay system) is an active-site residue. N-linked (GlcNAc...) asparagine glycosylation is present at asparagine 233.

This sequence belongs to the peptidase S1 family. Tryptase subfamily. In terms of assembly, homotetramer.

The protein resides in the secreted. The catalysed reaction is Preferential cleavage: Arg-|-Xaa, Lys-|-Xaa, but with more restricted specificity than trypsin.. Tryptase is the major neutral protease present in mast cells and is secreted upon the coupled activation-degranulation response of this cell type. The chain is Tryptase (MCT7) from Sus scrofa (Pig).